A 430-amino-acid polypeptide reads, in one-letter code: Probable sugar isomerase R00627 (430 aa).

H257, D289, and D291 together coordinate Mn(2+).

Belongs to the rhamnose isomerase family. Mn(2+) is required as a cofactor.

The chain is Probable sugar isomerase R00627 from Rhizobium meliloti (strain 1021) (Ensifer meliloti).